The primary structure comprises 290 residues: Chloride intracellular channel exc-4 (290 aa).

A helical transmembrane segment spans residues 37 to 57 (LFCQEFWMELYALYEIGVARV).

This sequence belongs to the chloride channel CLIC family. As to quaternary structure, monomer. In terms of tissue distribution, expressed in the secretory system, hypodermis, vulva, pharyngeal muscle, rectal gland, tubular rectal epithelium cells, and tubular neuronal support cells in the head and tail.

It is found in the cytoplasm. The protein localises to the membrane. May insert into membranes and form chloride ion channels. Involved in the formation of the excretory canal. Required to prevent cystic lumenal expansions in the excretory cell. Not required for formation of the initial tube, but is required for regulating the size of the tube lumen as it grows. The polypeptide is Chloride intracellular channel exc-4 (exc-4) (Caenorhabditis elegans).